A 91-amino-acid chain; its full sequence is Small ribosomal subunit protein uS19 (91 aa).

The protein belongs to the universal ribosomal protein uS19 family.

Protein S19 forms a complex with S13 that binds strongly to the 16S ribosomal RNA. This is Small ribosomal subunit protein uS19 from Cupriavidus pinatubonensis (strain JMP 134 / LMG 1197) (Cupriavidus necator (strain JMP 134)).